Consider the following 178-residue polypeptide: Caveolin-1 (178 aa).

S2 is subject to N-acetylserine. S2 is modified (phosphoserine). The tract at residues 2-94 (SGGKYVDSEG…WKASFTTFTV (93 aa)) is required for homooligomerization. Residues 2 to 104 (SGGKYVDSEG…TKYWFYRLLS (103 aa)) lie on the Cytoplasmic side of the membrane. An N6-acetyllysine; alternate modification is found at K5. K5 is covalently cross-linked (Glycyl lysine isopeptide (Lys-Gly) (interchain with G-Cter in ubiquitin); alternate). Y6 bears the Phosphotyrosine mark. A Phosphoserine modification is found at S9. At Y14 the chain carries Phosphotyrosine; by ABL1. Y25 is modified (phosphotyrosine). Glycyl lysine isopeptide (Lys-Gly) (interchain with G-Cter in ubiquitin) cross-links involve residues K26, K30, K39, K47, and K57. Residues 82 to 94 (DGIWKASFTTFTV) form an interaction with CAVIN3 region. The helical intramembrane region spans 105-125 (ALFGIPMALIWGIYFAILSFL). The Cytoplasmic portion of the chain corresponds to 126–178 (HIWAVVPCIKSFLIEIQCISRVYSIYVHTFCDPLFEAIGKIFSNIRINMQKEI). Positions 131–142 (VPCIKSFLIEIQ) are interacts with SPRY1, SPRY2, SPRY3 and SPRY4. Residues C133, C143, and C156 are each lipidated (S-palmitoyl cysteine). Residues 149 to 160 (SIYVHTFCDPLF) are interacts with SPRY1, SPRY2, and SPRY4. Residues 167 to 178 (FSNIRINMQKEI) are interacts with SPRY1, SPRY2, SPRY3 and SPRY4.

Belongs to the caveolin family. In terms of assembly, homooligomer. Interacts (via the N-terminus) with DPP4; the interaction is direct. Forms a stable heterooligomeric complex with CAV2 that targets to lipid rafts and drives caveolae formation. Interacts with PACSIN2; this interaction induces membrane tubulation. Interacts with BMX, BTK, CTNNB1, CDH1, GLIPR2, JUP, NOSTRIN, SNAP25 and STX1A. Interacts with SLC7A9. Interacts with TGFBR1. Interacts with CAVIN3 (via leucine-zipper domain) in a cholesterol-sensitive manner. Interacts with CAVIN1. Interacts with EHD2 in a cholesterol-dependent manner. Forms a ternary complex with UBXN6 and VCP; mediates CAV1 targeting to lysosomes for degradation. Interacts with ABCG1; this interaction regulates ABCG1-mediated cholesterol efflux. Interacts with NEU3; this interaction enhances NEU3 sialidase activity within caveola. Interacts (via C-terminus) with SPRY1, SPRY2 (via C-terminus), SPRY3, and SPRY4. Post-translationally, phosphorylated at Tyr-14 by ABL1 in response to oxidative stress. Ubiquitinated. Undergo monoubiquitination and multi- and/or polyubiquitination. Monoubiquitination of N-terminal lysines promotes integration in a ternary complex with UBXN6 and VCP which promotes oligomeric CAV1 targeting to lysosomes for degradation. Ubiquitinated by ZNRF1; leading to degradation and modulation of the TLR4-mediated immune response.

The protein localises to the golgi apparatus membrane. The protein resides in the cell membrane. It localises to the membrane. Its subcellular location is the caveola. It is found in the membrane raft. May act as a scaffolding protein within caveolar membranes. Forms a stable heterooligomeric complex with CAV2 that targets to lipid rafts and drives caveolae formation. Mediates the recruitment of CAVIN proteins (CAVIN1/2/3/4) to the caveolae. Interacts directly with G-protein alpha subunits and can functionally regulate their activity. Involved in the costimulatory signal essential for T-cell receptor (TCR)-mediated T-cell activation. Its binding to DPP4 induces T-cell proliferation and NF-kappa-B activation in a T-cell receptor/CD3-dependent manner. Recruits CTNNB1 to caveolar membranes and may regulate CTNNB1-mediated signaling through the Wnt pathway. Negatively regulates TGFB1-mediated activation of SMAD2/3 by mediating the internalization of TGFBR1 from membrane rafts leading to its subsequent degradation. Binds 20(S)-hydroxycholesterol (20(S)-OHC). This Otolemur garnettii (Small-eared galago) protein is Caveolin-1 (CAV1).